The sequence spans 546 residues: Sodium/hydrogen exchanger 2 (546 aa).

Topologically, residues Met1–Ser21 are cytoplasmic. The helical transmembrane segment at Val22–Leu42 threads the bilayer. The Vacuolar segment spans residues Glu43–Trp47. A helical transmembrane segment spans residues Met48–Ile68. The Cytoplasmic segment spans residues Ser69–His75. Residues Leu76–Ala96 constitute an intramembrane region (helical). At Gly97–Thr111 the chain is on the cytoplasmic side. The helical transmembrane segment at Ile112 to Ile132 threads the bilayer. Residues Gln133–Phe148 lie on the Vacuolar side of the membrane. 2 intramembrane regions (helical) span residues Leu149–Asn168 and Leu174–Phe194. The Vacuolar portion of the chain corresponds to Asn195 to Phe218. Residues Tyr219–Ile239 form a helical membrane-spanning segment. The Cytoplasmic portion of the chain corresponds to Lys240 to Tyr264. Residues Met265 to Met285 form a helical membrane-spanning segment. Over Ser286–Ala304 the chain is Vacuolar. Asn292 is a glycosylation site (N-linked (GlcNAc...) asparagine). The chain crosses the membrane as a helical span at residues Phe305–Leu325. At Asp326 to Ser344 the chain is on the cytoplasmic side. Residues Ser345 to Leu365 form a helical membrane-spanning segment. The Vacuolar segment spans residues Ser366–Gln381. The chain crosses the membrane as a helical span at residues Gln382–Asn402. Over Lys403 to Asn415 the chain is Cytoplasmic. A helical membrane pass occupies residues Ala416–Leu436. The Vacuolar portion of the chain corresponds to Thr437–Pro546.

Belongs to the monovalent cation:proton antiporter 1 (CPA1) transporter (TC 2.A.36) family. In terms of tissue distribution, expressed in roots and shoots.

It localises to the vacuole membrane. It carries out the reaction Na(+)(in) + H(+)(out) = Na(+)(out) + H(+)(in). The catalysed reaction is K(+)(in) + H(+)(out) = K(+)(out) + H(+)(in). Acts in low affinity electroneutral exchange of protons for cations such as Na(+) or K(+) across membranes. May also exchange Li(+) and Cs(+) with a lower affinity. Involved in vacuolar ion compartmentalization necessary for cell volume regulation and cytoplasmic Na(+) detoxification. The chain is Sodium/hydrogen exchanger 2 (NHX2) from Arabidopsis thaliana (Mouse-ear cress).